We begin with the raw amino-acid sequence, 1130 residues long: Sodium/potassium/calcium exchanger 1 (1130 aa).

The Extracellular portion of the chain corresponds to 1-419; that stretch reads MGKLIRMGTQ…DLFSVEDRRQ (419 aa). Positions 104-209 are disordered; it reads PSIAMEDTPN…SPTATVRDRE (106 aa). The segment covering 125–136 has biased composition (polar residues); it reads LKNSYSPTTAGT. The segment covering 170-187 has biased composition (basic and acidic residues); sequence PRGERKNSSPTHAREKGR. N-linked (GlcNAc...) asparagine glycans are attached at residues Asn176 and Asn273. Positions 274–295 are disordered; it reads ISTTPQGAVPQHTPATSEEQMT. Polar residues predominate over residues 286 to 295; that stretch reads TPATSEEQMT. The helical transmembrane segment at 420–440 threads the bilayer; sequence GWVVLHIFGMMYVFVALAIVC. The Cytoplasmic segment spans residues 441–464; sequence DEYFVPALGVITHKLQISEDVAGA. An Alpha-1 repeat occupies 461 to 501; sequence VAGATFMAAGGSAPELFTSLIGVFISHSNVGIGTIVGSAVF. A helical membrane pass occupies residues 465-485; it reads TFMAAGGSAPELFTSLIGVFI. Residues 486-489 lie on the Extracellular side of the membrane; the sequence is SHSN. A helical transmembrane segment spans residues 490 to 510; it reads VGIGTIVGSAVFNILFVIGTC. Over 511 to 530 the chain is Cytoplasmic; that stretch reads ALFSREILNLTWWPLFRDVS. A helical transmembrane segment spans residues 531-551; sequence FYILDLSMLIVFFLDSFIAWW. Glu552 is a topological domain (extracellular). A helical membrane pass occupies residues 553–573; sequence SLLLLLAYALYVFTMKWNKQI. Residues 574-938 lie on the Cytoplasmic side of the membrane; that stretch reads ELWVKEQLSR…SLEWPDSRQK (365 aa). Residues 598-619 are disordered; it reads PSEDAVEENEQQDSKKLKLPSV. The residue at position 625 (Ser625) is a Phosphoserine. Residues 650 to 932 are disordered; the sequence is GEARPSKDKQ…ENEEPLSLEW (283 aa). The span at 661 to 675 shows a compositional bias: polar residues; that stretch reads SLNQEARVLSQTKAE. A Phosphothreonine modification is found at Thr690. Residues 703 to 715 are compositionally biased toward acidic residues; the sequence is QEDDPGCQEDVDE. Over residues 730–751 the composition is skewed to basic and acidic residues; the sequence is ETETEGKKDEQEGETEAERKED. Acidic residues-rich tracts occupy residues 766–782 and 802–820; these read GETEAEGKEDEQEGETE and QEGETEAEGKEDEQEGETE. Residues 833–855 show a composition bias toward basic and acidic residues; that stretch reads AESKEVEQERETEAEGKDKHEGQ. Composition is skewed to acidic residues over residues 870–880 and 896–928; these read GETEANAEDQC and DGGDSEEEEDEEDEEEEEEEDEEEEEEENEEPL. Residues 939–959 form a helical membrane-spanning segment; that stretch reads QAIYLFLLPIVFPLWLTIPDV. The Extracellular portion of the chain corresponds to 960–966; it reads RRQESRK. The chain crosses the membrane as a helical span at residues 967–987; the sequence is FFVITFLGSIIWIAMFSYLMV. Over 988–1002 the chain is Cytoplasmic; that stretch reads WWAHQVGETIGISEE. A helical transmembrane segment spans residues 1003-1023; it reads IMGLTILAAGTSIPDLITSVI. One copy of the Alpha-2 repeat lies at 1010 to 1041; that stretch reads AAGTSIPDLITSVIVARKGLGDMAVSSSVGSN. Topologically, residues 1024 to 1041 are extracellular; that stretch reads VARKGLGDMAVSSSVGSN. A helical transmembrane segment spans residues 1042-1062; the sequence is IFDITVGLPVPWLLFSLINAL. The Cytoplasmic portion of the chain corresponds to 1063 to 1070; it reads QPVPVSSN. Residues 1071–1091 form a helical membrane-spanning segment; it reads GLFCAIVLLFLMLLFVIFSIA. Residues 1092 to 1099 are Extracellular-facing; it reads SCKWRMNK. The helical transmembrane segment at 1100–1120 threads the bilayer; it reads ILGFTMFLLYFVFLVISVMLE. Topologically, residues 1121 to 1130 are cytoplasmic; that stretch reads DRIISCPVSV.

Belongs to the Ca(2+):cation antiporter (CaCA) (TC 2.A.19) family. SLC24A subfamily. In terms of processing, the uncleaved signal sequence is required for efficient membrane targeting and proper membrane integration and topology.

Its subcellular location is the cell membrane. It carries out the reaction Ca(2+)(out) + K(+)(out) + 4 Na(+)(in) = Ca(2+)(in) + K(+)(in) + 4 Na(+)(out). Calcium, potassium:sodium antiporter that transports 1 Ca(2+) and 1 K(+) in exchange for 4 Na(+). Critical component of the visual transduction cascade, controlling the calcium concentration of outer segments during light and darkness. Light causes a rapid lowering of cytosolic free calcium in the outer segment of both retinal rod and cone photoreceptors and the light-induced lowering of calcium is caused by extrusion via this protein which plays a key role in the process of light adaptation. The polypeptide is Sodium/potassium/calcium exchanger 1 (Mus musculus (Mouse)).